The primary structure comprises 163 residues: Type II secretion system protein M (163 aa).

Residues 1 to 19 (MMDKLQGWWRSISAREQRL) lie on the Cytoplasmic side of the membrane. Residues 20–40 (VAVGGSCLLIGFCYWIVWQPI) traverse the membrane as a helical segment. Residues 41–163 (ANRIAERERQ…VRRLQLSRPQ (123 aa)) lie on the Periplasmic side of the membrane.

It belongs to the GSP M family. Type II secretion system is composed of four main components: the outer membrane complex, the inner membrane complex, the cytoplasmic secretion ATPase and the periplasm-spanning pseudopilus. Forms homodimers. Interacts with ExeL/GspL. Interacts with ExeE/GspE and ExeF/GspF.

It is found in the cell inner membrane. Inner membrane component of the type II secretion system required for the energy-dependent secretion of extracellular factors such as proteases and toxins from the periplasm. Plays a role in the complex assembly and recruits ExeL resulting in a stable complex in the inner membrane. Provides thus a link between the energy-providing ExeE protein in the cytoplasm and the rest of the T2SS machinery. This is Type II secretion system protein M (exeM) from Aeromonas hydrophila.